Reading from the N-terminus, the 282-residue chain is Bacterial lipoprotein FTN_1103 (282 aa).

Residues 1–28 (MKYGNLMMTKKKLLIGMVTISGIVILGS) form the signal peptide. Cysteine 29 carries the N-palmitoyl cysteine lipid modification. Residue cysteine 29 is the site of S-diacylglycerol cysteine attachment.

It localises to the cell membrane. In terms of biological role, stimulates the host immune inflammatory signaling system allowing the host to combat the bacteria. Stimulates mouse interleukin-6 (Il6) production. In Francisella tularensis subsp. novicida (strain U112), this protein is Bacterial lipoprotein FTN_1103.